We begin with the raw amino-acid sequence, 199 residues long: Signal peptidase complex subunit 2 (199 aa).

Residues 1–49 (MGKKDEKSQQGEELVKVNKWDGSAVKHALDDAVKTCLLGDRPQLKEQFG) are Cytoplasmic-facing. Residues 50-72 (LVNTRLALCALAVSVAIMAHAWD) form a helical membrane-spanning segment. At 73–81 (FTHPFPESR) the chain is on the lumenal side. Residues 82 to 104 (PVLLFSVLAYFALLGILTLHSSF) traverse the membrane as a helical segment. Residues 105 to 199 (REKGTFAVAL…KKNASSLSSN (95 aa)) lie on the Cytoplasmic side of the membrane.

This sequence belongs to the SPCS2 family. As to quaternary structure, component of the signal peptidase complex (SPC) composed of a catalytic subunit twr/SEC11 and three accessory subunits Spase12/SPCS1, Spase25/SPCS2 and Spase22-23/SPCS3. The complex induces a local thinning of the ER membrane which is used to measure the length of the signal peptide (SP) h-region of protein substrates. This ensures the selectivity of the complex towards h-regions shorter than 18-20 amino acids.

The protein localises to the endoplasmic reticulum membrane. Component of the signal peptidase complex (SPC) which catalyzes the cleavage of N-terminal signal sequences from nascent proteins as they are translocated into the lumen of the endoplasmic reticulum. Enhances the enzymatic activity of SPC and facilitates the interactions between different components of the translocation site. The chain is Signal peptidase complex subunit 2 (Spase25) from Drosophila melanogaster (Fruit fly).